Here is a 350-residue protein sequence, read N- to C-terminus: TLC domain-containing protein fld-1 (350 aa).

The chain crosses the membrane as a helical span at residues 9–29; the sequence is TDLLGPVPTMFLWVIVSFAFF. The disordered stretch occupies residues 65 to 100; sequence GQEAENTENPPENEAEAGEQVEQEPEPDSRDLSAIP. Residues 75-90 are compositionally biased toward acidic residues; it reads PENEAEAGEQVEQEPE. The TLC domain occupies 102–279; the sequence is NKKWRISNEC…IINGLVIASL (178 aa). A run of 6 helical transmembrane segments spans residues 111–131, 145–165, 173–193, 195–215, 229–249, and 270–292; these read CVSL…LLYY, VAIN…VDLL, IIEL…TMFF, RFLG…FLHS, PSFR…RLCV, and IING…RLLA.

Ubiquitously expressed.

The protein resides in the cell membrane. Functionally, regulates the composition and fluidity of the plasma membrane. Inhibits the incorporation of membrane-fluidizing phospholipids containing omega-3 long-chain polyunsaturated fatty acids (LCPUFA) and thereby promotes membrane rigidity. Does not appear to have any effect on LCPUFA synthesis. In Caenorhabditis elegans, this protein is TLC domain-containing protein fld-1.